We begin with the raw amino-acid sequence, 233 residues long: Octanoyltransferase (233 aa).

Residues 38–218 form the BPL/LPL catalytic domain; the sequence is AGGPDTLLLL…AVCDALDGVL (181 aa). A compositionally biased stretch (basic and acidic residues) spans 57–66; that stretch reads RRTEPHERPL. The disordered stretch occupies residues 57 to 77; it reads RRTEPHERPLDGTPVVDTDRG. Substrate is bound by residues 76-83, 148-150, and 161-163; these read RGGKITWH, AIG, and GFA. Cys179 acts as the Acyl-thioester intermediate in catalysis.

This sequence belongs to the LipB family.

It localises to the cytoplasm. The catalysed reaction is octanoyl-[ACP] + L-lysyl-[protein] = N(6)-octanoyl-L-lysyl-[protein] + holo-[ACP] + H(+). It functions in the pathway protein modification; protein lipoylation via endogenous pathway; protein N(6)-(lipoyl)lysine from octanoyl-[acyl-carrier-protein]: step 1/2. Catalyzes the transfer of endogenously produced octanoic acid from octanoyl-acyl-carrier-protein onto the lipoyl domains of lipoate-dependent enzymes. Lipoyl-ACP can also act as a substrate although octanoyl-ACP is likely to be the physiological substrate. This Mycolicibacterium paratuberculosis (strain ATCC BAA-968 / K-10) (Mycobacterium paratuberculosis) protein is Octanoyltransferase.